Here is a 365-residue protein sequence, read N- to C-terminus: Alanine racemase (365 aa).

The active-site Proton acceptor; specific for D-alanine is Lys-35. Lys-35 bears the N6-(pyridoxal phosphate)lysine mark. Position 130 (Arg-130) interacts with substrate. Tyr-256 acts as the Proton acceptor; specific for L-alanine in catalysis. Residue Met-304 participates in substrate binding.

It belongs to the alanine racemase family. The cofactor is pyridoxal 5'-phosphate.

It carries out the reaction L-alanine = D-alanine. It functions in the pathway amino-acid biosynthesis; D-alanine biosynthesis; D-alanine from L-alanine: step 1/1. Its function is as follows. Catalyzes the interconversion of L-alanine and D-alanine. May also act on other amino acids. The chain is Alanine racemase (alr) from Acidovorax ebreus (strain TPSY) (Diaphorobacter sp. (strain TPSY)).